The following is a 294-amino-acid chain: Deubiquitinase OTUD6B (294 aa).

Met1 bears the N-acetylmethionine mark. The OTU domain maps to 148–285 (LEIKQIPSDG…GEHYNSVTRL (138 aa)). The interval 153-159 (IPSDGHC) is cys-loop. Residue Asp156 is part of the active site. Cys159 functions as the Nucleophile in the catalytic mechanism. Positions 220–230 (IVNTAAWGGQL) are variable-loop. A his-loop region spans residues 268–278 (YMRHAYGLGEH). His278 is a catalytic residue.

Interacts with the eukaryotic translation initiation factor 4F complex. In terms of tissue distribution, ubiquitously expressed. Expression is observed in several organ systems including the cardiovascular, digestive, central and peripheral nervous and musculoskeletal systems.

The catalysed reaction is Thiol-dependent hydrolysis of ester, thioester, amide, peptide and isopeptide bonds formed by the C-terminal Gly of ubiquitin (a 76-residue protein attached to proteins as an intracellular targeting signal).. Functionally, deubiquitinating enzyme that may play a role in the ubiquitin-dependent regulation of protein synthesis, downstream of mTORC1. May associate with the protein synthesis initiation complex and modify its ubiquitination to repress translation. May also repress DNA synthesis and modify different cellular targets thereby regulating cell growth and proliferation. May also play a role in proteasome assembly and function. This chain is Deubiquitinase OTUD6B, found in Mus musculus (Mouse).